The primary structure comprises 542 residues: Esterase 6 (542 aa).

The signal sequence occupies residues 1-19 (MNYVGLIIVLSCLWLGSNA). A glycan (N-linked (GlcNAc...) asparagine) is linked at Asn40. The cysteines at positions 84 and 103 are disulfide-linked. Ser207 (acyl-ester intermediate) is an active-site residue. Cysteines 259 and 271 form a disulfide. Asn418 and Asn454 each carry an N-linked (GlcNAc...) asparagine glycan. The Charge relay system role is filled by His464. Cys512 and Cys533 are disulfide-bonded.

The protein belongs to the type-B carboxylesterase/lipase family. Monomer.

It localises to the secreted. The catalysed reaction is a carboxylic ester + H2O = an alcohol + a carboxylate + H(+). Transferred from the ejaculatory bulbs of males to the female genitals upon copulation, plays an important role in the reproductive biology. The chain is Esterase 6 (Est-6) from Drosophila simulans (Fruit fly).